Here is a 476-residue protein sequence, read N- to C-terminus: Angiotensinogen (476 aa).

Residues 1–24 (MAPAGMSLRATILCLLAWAGLAAG) form the signal peptide. N-linked (GlcNAc...) asparagine glycosylation is found at asparagine 38, asparagine 161, asparagine 295, and asparagine 319. A disulfide bridge links cysteine 42 with cysteine 162.

Belongs to the serpin family. In response to low blood pressure, the enzyme renin/REN cleaves angiotensinogen to produce angiotensin-1. Angiotensin-1 is a substrate of ACE (angiotensin converting enzyme) that removes a dipeptide to yield the physiologically active peptide angiotensin-2. Angiotensin-1 and angiotensin-2 can be further processed to generate angiotensin-3, angiotensin-4. Angiotensin 1-9 is cleaved from angiotensin-1 by ACE2 and can be further processed by ACE to produce angiotensin 1-7, angiotensin 1-5 and angiotensin 1-4. Angiotensin 1-7 has also been proposed to be cleaved from angiotensin-2 by ACE2 or from angiotensin-1 by MME (neprilysin). Post-translationally, the disulfide bond is labile. Angiotensinogen is present in the circulation in a near 40:60 ratio with the oxidized disulfide-bonded form, which preferentially interacts with receptor-bound renin.

It localises to the secreted. Functionally, essential component of the renin-angiotensin system (RAS), a potent regulator of blood pressure, body fluid and electrolyte homeostasis. Its function is as follows. Acts directly on vascular smooth muscle as a potent vasoconstrictor, affects cardiac contractility and heart rate through its action on the sympathetic nervous system, and alters renal sodium and water absorption through its ability to stimulate the zona glomerulosa cells of the adrenal cortex to synthesize and secrete aldosterone. Acts by binding to angiotensin receptors AGTR1 and AGTR2. Also binds the DEAR/FBXW7-AS1 receptor. Stimulates aldosterone release. In terms of biological role, is a ligand for the G-protein coupled receptor MAS1. Has vasodilator and antidiuretic effects. Has an antithrombotic effect that involves MAS1-mediated release of nitric oxide from platelets. This chain is Angiotensinogen (AGT), found in Gorilla gorilla gorilla (Western lowland gorilla).